The primary structure comprises 306 residues: Aspartate carbamoyltransferase catalytic subunit (306 aa).

2 residues coordinate carbamoyl phosphate: Arg-55 and Thr-56. Residue Lys-85 coordinates L-aspartate. 3 residues coordinate carbamoyl phosphate: Arg-106, His-133, and Gln-136. Residues Arg-166 and Arg-228 each contribute to the L-aspartate site. The carbamoyl phosphate site is built by Leu-264 and Pro-265.

It belongs to the aspartate/ornithine carbamoyltransferase superfamily. ATCase family. Heterododecamer (2C3:3R2) of six catalytic PyrB chains organized as two trimers (C3), and six regulatory PyrI chains organized as three dimers (R2).

It catalyses the reaction carbamoyl phosphate + L-aspartate = N-carbamoyl-L-aspartate + phosphate + H(+). The protein operates within pyrimidine metabolism; UMP biosynthesis via de novo pathway; (S)-dihydroorotate from bicarbonate: step 2/3. Its function is as follows. Catalyzes the condensation of carbamoyl phosphate and aspartate to form carbamoyl aspartate and inorganic phosphate, the committed step in the de novo pyrimidine nucleotide biosynthesis pathway. The chain is Aspartate carbamoyltransferase catalytic subunit from Serratia marcescens.